The following is a 333-amino-acid chain: NADH-quinone oxidoreductase subunit H (333 aa).

8 helical membrane-spanning segments follow: residues 17 to 37, 88 to 108, 117 to 137, 159 to 179, 191 to 211, 241 to 261, 273 to 293, and 313 to 333; these read IFFA…TYGI, FILA…ALPF, IGVG…GVVT, ISYE…SGSL, VWFI…AVAE, FFML…TVLF, FIPG…LFIW, and VLLP…QLFF.

Belongs to the complex I subunit 1 family. In terms of assembly, NDH-1 is composed of 14 different subunits. Subunits NuoA, H, J, K, L, M, N constitute the membrane sector of the complex.

It is found in the cell membrane. It catalyses the reaction a quinone + NADH + 5 H(+)(in) = a quinol + NAD(+) + 4 H(+)(out). Functionally, NDH-1 shuttles electrons from NADH, via FMN and iron-sulfur (Fe-S) centers, to quinones in the respiratory chain. The immediate electron acceptor for the enzyme in this species is believed to be ubiquinone. Couples the redox reaction to proton translocation (for every two electrons transferred, four hydrogen ions are translocated across the cytoplasmic membrane), and thus conserves the redox energy in a proton gradient. This subunit may bind ubiquinone. In Anoxybacillus flavithermus (strain DSM 21510 / WK1), this protein is NADH-quinone oxidoreductase subunit H.